Reading from the N-terminus, the 217-residue chain is Pyridoxine/pyridoxamine 5'-phosphate oxidase (217 aa).

Substrate is bound by residues 13–16 and Lys71; that span reads RREY. FMN-binding positions include 66 to 71, 81 to 82, Arg87, Lys88, and Gln110; these read RIVLLK and YT. Positions 128, 132, and 136 each coordinate substrate. Residues 145–146 and Trp190 contribute to the FMN site; that span reads QS. 196-198 is a substrate binding site; it reads RLH. An FMN-binding site is contributed by Arg200.

The protein belongs to the pyridoxamine 5'-phosphate oxidase family. Homodimer. Requires FMN as cofactor.

The catalysed reaction is pyridoxamine 5'-phosphate + O2 + H2O = pyridoxal 5'-phosphate + H2O2 + NH4(+). It catalyses the reaction pyridoxine 5'-phosphate + O2 = pyridoxal 5'-phosphate + H2O2. It functions in the pathway cofactor metabolism; pyridoxal 5'-phosphate salvage; pyridoxal 5'-phosphate from pyridoxamine 5'-phosphate: step 1/1. The protein operates within cofactor metabolism; pyridoxal 5'-phosphate salvage; pyridoxal 5'-phosphate from pyridoxine 5'-phosphate: step 1/1. Functionally, catalyzes the oxidation of either pyridoxine 5'-phosphate (PNP) or pyridoxamine 5'-phosphate (PMP) into pyridoxal 5'-phosphate (PLP). The sequence is that of Pyridoxine/pyridoxamine 5'-phosphate oxidase from Photorhabdus laumondii subsp. laumondii (strain DSM 15139 / CIP 105565 / TT01) (Photorhabdus luminescens subsp. laumondii).